The following is a 115-amino-acid chain: Non-specific lipid-transfer protein 4.1 (115 aa).

The signal sequence occupies residues 1–25 (MARAAASQLVLVALVAAMLLVAADA). 4 disulfides stabilise this stretch: Cys-29–Cys-77, Cys-39–Cys-54, Cys-55–Cys-97, and Cys-75–Cys-111.

The protein belongs to the plant LTP family.

Functionally, plant non-specific lipid-transfer proteins transfer phospholipids as well as galactolipids across membranes. May play a role in wax or cutin deposition in the cell walls of expanding epidermal cells and certain secretory tissues. The chain is Non-specific lipid-transfer protein 4.1 (LTP4.1) from Hordeum vulgare (Barley).